The primary structure comprises 490 residues: Probable malate:quinone oxidoreductase (490 aa).

Belongs to the MQO family. It depends on FAD as a cofactor.

The catalysed reaction is (S)-malate + a quinone = a quinol + oxaloacetate. Its pathway is carbohydrate metabolism; tricarboxylic acid cycle; oxaloacetate from (S)-malate (quinone route): step 1/1. The chain is Probable malate:quinone oxidoreductase from Corynebacterium jeikeium (strain K411).